A 256-amino-acid chain; its full sequence is Large ribosomal subunit protein eL8y (256 aa).

A compositionally biased stretch (basic residues) spans 1 to 15 (MAPKKGVKVASKKKP). The tract at residues 1 to 20 (MAPKKGVKVASKKKPEKVTN) is disordered.

This sequence belongs to the eukaryotic ribosomal protein eL8 family.

In Arabidopsis thaliana (Mouse-ear cress), this protein is Large ribosomal subunit protein eL8y (RPL7AB).